The following is a 461-amino-acid chain: Argininosuccinate lyase (461 aa).

The protein belongs to the lyase 1 family. Argininosuccinate lyase subfamily.

It is found in the cytoplasm. It carries out the reaction 2-(N(omega)-L-arginino)succinate = fumarate + L-arginine. The protein operates within amino-acid biosynthesis; L-arginine biosynthesis; L-arginine from L-ornithine and carbamoyl phosphate: step 3/3. The sequence is that of Argininosuccinate lyase from Chlorobium chlorochromatii (strain CaD3).